Here is a 361-residue protein sequence, read N- to C-terminus: Tetraacyldisaccharide 4'-kinase (361 aa).

Residue Thr-49–Thr-56 participates in ATP binding.

It belongs to the LpxK family.

It carries out the reaction a lipid A disaccharide + ATP = a lipid IVA + ADP + H(+). The protein operates within glycolipid biosynthesis; lipid IV(A) biosynthesis; lipid IV(A) from (3R)-3-hydroxytetradecanoyl-[acyl-carrier-protein] and UDP-N-acetyl-alpha-D-glucosamine: step 6/6. In terms of biological role, transfers the gamma-phosphate of ATP to the 4'-position of a tetraacyldisaccharide 1-phosphate intermediate (termed DS-1-P) to form tetraacyldisaccharide 1,4'-bis-phosphate (lipid IVA). The sequence is that of Tetraacyldisaccharide 4'-kinase from Chlorobaculum parvum (strain DSM 263 / NCIMB 8327) (Chlorobium vibrioforme subsp. thiosulfatophilum).